We begin with the raw amino-acid sequence, 834 residues long: WPP domain-associated protein (834 aa).

Coiled coils occupy residues 410–456 (SFGN…RLQH), 574–700 (SLDT…VLAI), and 792–812 (AEAEVDLLGDEVDTLLSLVEK).

As to quaternary structure, interacts with MAF1. In terms of tissue distribution, expressed in seedlings, leaves and fruits.

It localises to the golgi apparatus. Its subcellular location is the cytoplasm. The polypeptide is WPP domain-associated protein (WAP) (Solanum lycopersicum (Tomato)).